We begin with the raw amino-acid sequence, 293 residues long: Ribosomal RNA small subunit methyltransferase H (293 aa).

Residues 32 to 34 (GGH), Asp51, Phe78, Asp99, and Gln106 contribute to the S-adenosyl-L-methionine site. The segment at 272–293 (SDEEIKENPASRSAKLRVGRRI) is disordered.

The protein belongs to the methyltransferase superfamily. RsmH family.

The protein localises to the cytoplasm. The catalysed reaction is cytidine(1402) in 16S rRNA + S-adenosyl-L-methionine = N(4)-methylcytidine(1402) in 16S rRNA + S-adenosyl-L-homocysteine + H(+). Functionally, specifically methylates the N4 position of cytidine in position 1402 (C1402) of 16S rRNA. In Sulfurihydrogenibium sp. (strain YO3AOP1), this protein is Ribosomal RNA small subunit methyltransferase H.